Reading from the N-terminus, the 95-residue chain is Small ribosomal subunit protein uS19 (95 aa).

The protein belongs to the universal ribosomal protein uS19 family.

In terms of biological role, protein S19 forms a complex with S13 that binds strongly to the 16S ribosomal RNA. The sequence is that of Small ribosomal subunit protein uS19 from Myxococcus xanthus (strain DK1622).